A 933-amino-acid polypeptide reads, in one-letter code: C-1-tetrahydrofolate synthase, cytoplasmic (933 aa).

The methylenetetrahydrofolate dehydrogenase and cyclohydrolase stretch occupies residues 1–303 (MWEPQGSLDP…DRLLAPTWPL (303 aa)). Substrate-binding positions include 51–55 (YIRMK) and 98–100 (VQM). Residues 170–172 (GRS) and serine 195 each bind NADP(+). 270 to 274 (PGGVG) contributes to the substrate binding site. Residues 304-933 (RPLRITPLSP…TKTGEIEGLF (630 aa)) form a formyltetrahydrofolate synthetase region. ATP is bound at residue 378–385 (TPLGEGKS).

In the N-terminal section; belongs to the tetrahydrofolate dehydrogenase/cyclohydrolase family. It in the C-terminal section; belongs to the formate--tetrahydrofolate ligase family. In terms of assembly, homodimer.

Its subcellular location is the cytoplasm. The enzyme catalyses (6R)-5,10-methylene-5,6,7,8-tetrahydrofolate + NADP(+) = (6R)-5,10-methenyltetrahydrofolate + NADPH. It catalyses the reaction (6R)-5,10-methenyltetrahydrofolate + H2O = (6R)-10-formyltetrahydrofolate + H(+). The catalysed reaction is (6S)-5,6,7,8-tetrahydrofolate + formate + ATP = (6R)-10-formyltetrahydrofolate + ADP + phosphate. The protein operates within one-carbon metabolism; tetrahydrofolate interconversion. The sequence is that of C-1-tetrahydrofolate synthase, cytoplasmic from Spodoptera frugiperda (Fall armyworm).